Consider the following 297-residue polypeptide: Iron-sulfur cluster assembly SufBD family protein ycf24 (297 aa).

It belongs to the iron-sulfur cluster assembly SufBD family.

Its subcellular location is the plastid. It is found in the chloroplast. The protein is Iron-sulfur cluster assembly SufBD family protein ycf24 (ycf24) of Antithamnion sp. (Red alga).